A 309-amino-acid chain; its full sequence is Solute carrier family 25 member 48 (309 aa).

Solcar repeat units lie at residues 3 to 86 (VFQL…TQRL), 99 to 209 (CSML…FCNW), and 218 to 305 (PPPC…SLQF). 6 helical membrane passes run 9 to 29 (FLAGWIGGASSVIVGHPLDTV), 61 to 81 (GLSFPLASITLYNSMVFGFFS), 105 to 125 (TVASMLTGLVSVGVGAPVDLV), 186 to 206 (GAMILRDIPGYALYFIPYTLF), 218 to 238 (PPPCCIWLAGGLAGSISWVTA), and 281 to 299 (ATVNAIRGFPMCATMFLGY).

Belongs to the mitochondrial carrier (TC 2.A.29) family.

It localises to the mitochondrion inner membrane. This chain is Solute carrier family 25 member 48 (slc25a48), found in Danio rerio (Zebrafish).